Here is a 206-residue protein sequence, read N- to C-terminus: Large ribosomal subunit protein uL4 (206 aa).

Residues 63–97 (MYKQKGTGRARHHSARAPQFRGGGKAHGPVVRSHE) are disordered. A compositionally biased stretch (basic residues) spans 64–77 (YKQKGTGRARHHSA).

This sequence belongs to the universal ribosomal protein uL4 family. As to quaternary structure, part of the 50S ribosomal subunit.

Functionally, one of the primary rRNA binding proteins, this protein initially binds near the 5'-end of the 23S rRNA. It is important during the early stages of 50S assembly. It makes multiple contacts with different domains of the 23S rRNA in the assembled 50S subunit and ribosome. In terms of biological role, forms part of the polypeptide exit tunnel. This chain is Large ribosomal subunit protein uL4, found in Rhizobium etli (strain CIAT 652).